A 298-amino-acid chain; its full sequence is Homoserine kinase (298 aa).

Residue 83–93 coordinates ATP; that stretch reads PVSRGLGSSST.

The protein belongs to the GHMP kinase family. Homoserine kinase subfamily.

Its subcellular location is the cytoplasm. It catalyses the reaction L-homoserine + ATP = O-phospho-L-homoserine + ADP + H(+). It functions in the pathway amino-acid biosynthesis; L-threonine biosynthesis; L-threonine from L-aspartate: step 4/5. Functionally, catalyzes the ATP-dependent phosphorylation of L-homoserine to L-homoserine phosphate. The protein is Homoserine kinase of Clostridium beijerinckii (strain ATCC 51743 / NCIMB 8052) (Clostridium acetobutylicum).